The chain runs to 359 residues: Phospho-N-acetylmuramoyl-pentapeptide-transferase (359 aa).

10 consecutive transmembrane segments (helical) span residues 3 to 23, 55 to 75, 80 to 100, 117 to 137, 156 to 176, 187 to 207, 231 to 251, 255 to 275, 280 to 300, and 334 to 354; these read QIMI…PALI, VAIL…GLAF, ITAS…VGFL, TAKT…VLQF, IATV…VVSA, LDGL…LITF, LALI…WNAA, IFMG…LSVT, ILAV…VLQI, and FWLL…GEWL.

This sequence belongs to the glycosyltransferase 4 family. MraY subfamily. It depends on Mg(2+) as a cofactor.

Its subcellular location is the cell membrane. The catalysed reaction is UDP-N-acetyl-alpha-D-muramoyl-L-alanyl-gamma-D-glutamyl-meso-2,6-diaminopimeloyl-D-alanyl-D-alanine + di-trans,octa-cis-undecaprenyl phosphate = di-trans,octa-cis-undecaprenyl diphospho-N-acetyl-alpha-D-muramoyl-L-alanyl-D-glutamyl-meso-2,6-diaminopimeloyl-D-alanyl-D-alanine + UMP. It functions in the pathway cell wall biogenesis; peptidoglycan biosynthesis. Catalyzes the initial step of the lipid cycle reactions in the biosynthesis of the cell wall peptidoglycan: transfers peptidoglycan precursor phospho-MurNAc-pentapeptide from UDP-MurNAc-pentapeptide onto the lipid carrier undecaprenyl phosphate, yielding undecaprenyl-pyrophosphoryl-MurNAc-pentapeptide, known as lipid I. In Mycobacterium ulcerans (strain Agy99), this protein is Phospho-N-acetylmuramoyl-pentapeptide-transferase.